Reading from the N-terminus, the 229-residue chain is Potassium/proton antiporter CemA (229 aa).

4 helical membrane-spanning segments follow: residues Phe-7–Phe-27, Leu-114–Leu-134, Ile-154–Ile-174, and Ile-189–Ile-209.

This sequence belongs to the CemA family.

Its subcellular location is the plastid. The protein localises to the chloroplast inner membrane. The catalysed reaction is K(+)(in) + H(+)(out) = K(+)(out) + H(+)(in). Functionally, contributes to K(+)/H(+) antiport activity by supporting proton efflux to control proton extrusion and homeostasis in chloroplasts in a light-dependent manner to modulate photosynthesis. Prevents excessive induction of non-photochemical quenching (NPQ) under continuous-light conditions. Indirectly promotes efficient inorganic carbon uptake into chloroplasts. This Gossypium hirsutum (Upland cotton) protein is Potassium/proton antiporter CemA.